Reading from the N-terminus, the 457-residue chain is DNA repair protein RadA (457 aa).

A C4-type zinc finger spans residues 10 to 27 (CQECGYESAKWMGKCPGC). 97-104 (GDPGIGKS) contributes to the ATP binding site. A RadA KNRFG motif motif is present at residues 254–258 (KNRFG). The tract at residues 353-457 (DAYVNVAGGV…QDALEVTLGR (105 aa)) is lon-protease-like.

It belongs to the RecA family. RadA subfamily.

Its function is as follows. DNA-dependent ATPase involved in processing of recombination intermediates, plays a role in repairing DNA breaks. Stimulates the branch migration of RecA-mediated strand transfer reactions, allowing the 3' invading strand to extend heteroduplex DNA faster. Binds ssDNA in the presence of ADP but not other nucleotides, has ATPase activity that is stimulated by ssDNA and various branched DNA structures, but inhibited by SSB. Does not have RecA's homology-searching function. The polypeptide is DNA repair protein RadA (Halalkalibacterium halodurans (strain ATCC BAA-125 / DSM 18197 / FERM 7344 / JCM 9153 / C-125) (Bacillus halodurans)).